Reading from the N-terminus, the 884-residue chain is DNA mismatch repair protein MutS (884 aa).

An ATP-binding site is contributed by Gly-651–Ser-658. Positions Leu-843 to Asp-884 are disordered.

This sequence belongs to the DNA mismatch repair MutS family.

In terms of biological role, this protein is involved in the repair of mismatches in DNA. It is possible that it carries out the mismatch recognition step. This protein has a weak ATPase activity. The protein is DNA mismatch repair protein MutS of Synechococcus sp. (strain JA-2-3B'a(2-13)) (Cyanobacteria bacterium Yellowstone B-Prime).